The primary structure comprises 374 residues: WW domain-binding protein 4 (374 aa).

The segment at 11–42 adopts a Matrin-type zinc-finger fold; the sequence is KFCDYCKCWIADNRPSVEFHERGKNHKENVAR. Residues 91 to 109 show a composition bias toward polar residues; that stretch reads EPTISPVTNTVQPTPTANQ. 2 disordered regions span residues 91-126 and 188-328; these read EPTI…SKGR and SKWE…EAGA. A compositionally biased stretch (basic residues) spans 112–121; that stretch reads EKKKKKKKKE. 2 WW domains span residues 121 to 154 and 162 to 195; these read EASK…KPEG and TAAK…KPDD. Composition is skewed to basic and acidic residues over residues 188 to 197 and 205 to 270; these read SKWEKPDDFI and SSKD…EKTT. 3 positions are modified to phosphoserine: serine 219, serine 226, and serine 228. Over residues 315-325 the composition is skewed to polar residues; sequence STENECLSSSE. The tract at residues 355–373 is interaction with SNRNP200; the sequence is KKRRIENGKSRNLRQRGED.

In terms of assembly, component of the spliceosome B complex. Associated with U2 snRNPs. Binds splicing factors SNRPB, SNRPC and SF1. Interacts via the WW domains with the Pro-rich domains of KHDRBS1/SAM68. Interacts via the WW domains with the Pro-rich domains of WBP11. Interacts with SNRNP200.

The protein localises to the nucleus. The protein resides in the nucleus speckle. In terms of biological role, involved in pre-mRNA splicing as a component of the spliceosome. May play a role in cross-intron bridging of U1 and U2 snRNPs in the mammalian A complex. The sequence is that of WW domain-binding protein 4 (Wbp4) from Rattus norvegicus (Rat).